The primary structure comprises 310 residues: tRNA dimethylallyltransferase (310 aa).

ATP is bound at residue 14–21 (GPTASGKT). 16-21 (TASGKT) lines the substrate pocket. Interaction with substrate tRNA regions lie at residues 39–42 (DSAL), 163–167 (QRLSR), and 244–249 (RCVGYR).

Belongs to the IPP transferase family. Monomer. Mg(2+) is required as a cofactor.

It carries out the reaction adenosine(37) in tRNA + dimethylallyl diphosphate = N(6)-dimethylallyladenosine(37) in tRNA + diphosphate. Its function is as follows. Catalyzes the transfer of a dimethylallyl group onto the adenine at position 37 in tRNAs that read codons beginning with uridine, leading to the formation of N6-(dimethylallyl)adenosine (i(6)A). The polypeptide is tRNA dimethylallyltransferase (Tolumonas auensis (strain DSM 9187 / NBRC 110442 / TA 4)).